Reading from the N-terminus, the 586-residue chain is Capsid scaffolding protein (586 aa).

Residues histidine 53, serine 123, and histidine 142 each act as charge relay system in the active site. Positions 251-263 are enriched in basic and acidic residues; the sequence is SEETPENAIKDRS. Disordered stretches follow at residues 251–288, 330–364, 458–486, and 530–586; these read SEET…HVPA, ARRD…DIWP, NKRD…YFPG, and SASN…MMAD. The span at 264–284 shows a compositional bias: polar residues; it reads VSTQTAPSFDISESQQPSGQT. The tract at residues 312-331 is interaction with pAP; the sequence is EDMVYVPFEKYASLLAASAR. 2 interaction with major capsid protein regions span residues 566–586 and 567–586; these read DAQT…MMAD and AQTK…MMAD.

The protein belongs to the herpesviridae capsid scaffolding protein family. In terms of assembly, homomultimer. Interacts with major capsid protein. As to quaternary structure, exists in a monomer-dimer equilibrium with the dimer being the active species. Capsid scaffolding protein is cleaved by assemblin after formation of the spherical procapsid. As a result, the capsid obtains its mature, icosahedral shape. Cleavages occur at two or more sites: release (R-site) and maturation (M-site).

It localises to the host cytoplasm. Its subcellular location is the host nucleus. The enzyme catalyses Cleaves -Ala-|-Ser- and -Ala-|-Ala- bonds in the scaffold protein.. Acts as a scaffold protein by binding major capsid protein in the cytoplasm, inducing the nuclear localization of both proteins. Multimerizes in the nucleus such as major capsid protein forms the icosahedral T=16 capsid. Autocatalytic cleavage releases the assembly protein, and subsequently abolishes interaction with major capsid protein. Cleavages products are evicted from the capsid before or during DNA packaging. Its function is as follows. Protease that plays an essential role in virion assembly within the nucleus. Catalyzes the cleavage of the assembly protein after formation of the spherical procapsid. By that cleavage, the capsid matures and gains its icosahedral shape. The cleavage sites seem to include -Ala-Ser-, -Ala-Ala-, as well as Ala-Thr bonds. Assemblin and cleavages products are evicted from the capsid before or during DNA packaging. Functionally, plays a major role in capsid assembly. Acts as a scaffold protein by binding major capsid protein. Multimerizes in the nucleus such as major capsid protein forms the icosahedral T=16 capsid. Cleaved by assemblin after capsid completion. The cleavages products are evicted from the capsid before or during DNA packaging. The protein is Capsid scaffolding protein of Gallus gallus (Chicken).